Here is a 128-residue protein sequence, read N- to C-terminus: Ribonuclease P protein component (128 aa).

It belongs to the RnpA family. Consists of a catalytic RNA component (M1 or rnpB) and a protein subunit.

The catalysed reaction is Endonucleolytic cleavage of RNA, removing 5'-extranucleotides from tRNA precursor.. RNaseP catalyzes the removal of the 5'-leader sequence from pre-tRNA to produce the mature 5'-terminus. It can also cleave other RNA substrates such as 4.5S RNA. The protein component plays an auxiliary but essential role in vivo by binding to the 5'-leader sequence and broadening the substrate specificity of the ribozyme. This Chromohalobacter salexigens (strain ATCC BAA-138 / DSM 3043 / CIP 106854 / NCIMB 13768 / 1H11) protein is Ribonuclease P protein component.